The sequence spans 248 residues: Uridylate kinase (248 aa).

Position 11–14 (11–14 (KISG)) interacts with ATP. Gly53 is a UMP binding site. ATP is bound by residues Gly54 and Arg58. Residues Asp74 and 135-142 (AGSPYLTT) each bind UMP. Residues Thr162, Tyr169, and Asp172 each contribute to the ATP site.

This sequence belongs to the UMP kinase family. As to quaternary structure, homohexamer.

The protein localises to the cytoplasm. It carries out the reaction UMP + ATP = UDP + ADP. It participates in pyrimidine metabolism; CTP biosynthesis via de novo pathway; UDP from UMP (UMPK route): step 1/1. Inhibited by UTP. Functionally, catalyzes the reversible phosphorylation of UMP to UDP. The chain is Uridylate kinase from Chlamydia pneumoniae (Chlamydophila pneumoniae).